A 342-amino-acid polypeptide reads, in one-letter code: MQFIDRAEIEVEGGKGGDGIVAFRREKYVPAGGPAGGNGGKGGSVVLKAEENLQTLLDFRYARRFKADDGKRGGPNNCTGAMGKDTIVEVPCGTVVYDLETEEILGDLVKNGQTLCVAQGGKGGLGNKHFLSNQNRAPEYALPGLEGEHRNLRLELKLLAEVGIIGLPNAGKSTLIASLSAARPKIADYPFTTLVPNLGVVRKPTGDGTVFADIPGLIAGAHEGIGLGHEFLRHIERTRLLLHLVDVTSADPIADYEVIQQELTAYGRGLSDRPQIIALNKVDACDQDTLDLIAEELQQLSQSEIFTISAVTKTGVEELLQAIWHRLDQATSNHQDSSLPLV.

One can recognise an Obg domain in the interval 1–159 (MQFIDRAEIE…RNLRLELKLL (159 aa)). The OBG-type G domain maps to 160 to 328 (AEVGIIGLPN…LLQAIWHRLD (169 aa)). Residues 166–173 (GLPNAGKS), 191–195 (FTTLV), 213–216 (DIPG), 280–283 (NKVD), and 309–311 (SAV) contribute to the GTP site. The Mg(2+) site is built by Ser-173 and Thr-193.

It belongs to the TRAFAC class OBG-HflX-like GTPase superfamily. OBG GTPase family. As to quaternary structure, monomer. Mg(2+) is required as a cofactor.

It localises to the cytoplasm. Functionally, an essential GTPase which binds GTP, GDP and possibly (p)ppGpp with moderate affinity, with high nucleotide exchange rates and a fairly low GTP hydrolysis rate. Plays a role in control of the cell cycle, stress response, ribosome biogenesis and in those bacteria that undergo differentiation, in morphogenesis control. The protein is GTPase Obg of Crocosphaera subtropica (strain ATCC 51142 / BH68) (Cyanothece sp. (strain ATCC 51142)).